The primary structure comprises 760 residues: General transcription and DNA repair factor IIH helicase subunit XPD (760 aa).

The Helicase ATP-binding domain maps to 7–283 (GLLVYFPYDY…KETDEQRLRE (277 aa)). Position 42–49 (42–49 (MPSGTGKT)) interacts with ATP. The [4Fe-4S] cluster site is built by cysteine 116, cysteine 134, cysteine 155, and cysteine 190. The DEAH box motif lies at 234-237 (DEAH). Positions 438–637 (MDASLAIKPV…TQSRILKARL (200 aa)) are mediates interaction with MMS19. Positions 682 to 695 (KRFARADKRGKLPR) match the Nuclear localization signal motif.

The protein belongs to the helicase family. RAD3/XPD subfamily. In terms of assembly, component of the 7-subunit TFIIH core complex composed of XPB/ERCC3, XPD/ERCC2, GTF2H1, GTF2H2, GTF2H3, GTF2H4 and GTF2H5, which is active in NER. The core complex associates with the 3-subunit CDK-activating kinase (CAK) module composed of CCNH/cyclin H, CDK7 and MNAT1 to form the 10-subunit holoenzyme (holo-TFIIH) active in transcription. The interaction with GTF2H2 results in the stimulation of the 5'--&gt;3' helicase activity. Component of the MMXD complex, which includes CIAO1, ERCC2, CIAO2B, MMS19 and SLC25A5. Interacts with CIAO1 and CIAO2B; the interaction WITH CIAO2B is direct. Interacts with ATF7IP. Interacts directly with MMS19. Part of TBP-based Pol II pre-initiation complex (PIC), in which Pol II core assembles with general transcription factors and other specific initiation factors including GTF2E1, GTF2E2, GTF2F1, GTF2F2, TCEA1, ERCC2, ERCC3, GTF2H2, GTF2H3, GTF2H4, GTF2H5, GTF2A1, GTF2A2, GTF2B and TBP; this large multi-subunit PIC complex mediates DNA unwinding and targets Pol II core to the transcription start site where the first phosphodiester bond forms. Requires Mg(2+) as cofactor. [4Fe-4S] cluster serves as cofactor. ISGylated.

It localises to the nucleus. Its subcellular location is the cytoplasm. The protein resides in the cytoskeleton. The protein localises to the spindle. The enzyme catalyses Couples ATP hydrolysis with the unwinding of duplex DNA at the replication fork by translocating in the 5'-3' direction. This creates two antiparallel DNA single strands (ssDNA). The leading ssDNA polymer is the template for DNA polymerase III holoenzyme which synthesizes a continuous strand.. The catalysed reaction is ATP + H2O = ADP + phosphate + H(+). In terms of biological role, ATP-dependent 5'-3' DNA helicase, component of the general transcription and DNA repair factor IIH (TFIIH) core complex, which is involved in general and transcription-coupled nucleotide excision repair (NER) of damaged DNA and, when complexed to CDK-activating kinase (CAK), involved in transcription by RNA polymerase II. In NER, TFIIH acts by opening DNA around the lesion to allow the excision of the damaged oligonucleotide and its replacement by a new DNA fragment. The ATP-dependent helicase activity of XPD/ERCC2 is required for DNA opening. In transcription, TFIIH has an essential role in transcription initiation. When the pre-initiation complex (PIC) has been established, TFIIH is required for promoter opening and promoter escape. Phosphorylation of the C-terminal tail (CTD) of the largest subunit of RNA polymerase II by the kinase module CAK controls the initiation of transcription. XPD/ERCC2 acts by forming a bridge between CAK and the core-TFIIH complex. Involved in the regulation of vitamin-D receptor activity. As part of the mitotic spindle-associated MMXD complex it plays a role in chromosome segregation. Might have a role in aging process and could play a causative role in the generation of skin cancers. The protein is General transcription and DNA repair factor IIH helicase subunit XPD (ERCC2) of Bos taurus (Bovine).